The following is an 828-amino-acid chain: Glycerol-3-phosphate acyltransferase 1, mitochondrial (828 aa).

Residues 1-87 are Cytoplasmic-facing; that stretch reads MDESALTLGT…FFNPSIPSLG (87 aa). Positions 80–120 are important for mitochondrial localization; it reads NPSIPSLGLRNVIYINETHTRHRGWLARRLSYVLFIQERDV. The stretch at 88 to 118 is an intramembrane region; sequence LRNVIYINETHTRHRGWLARRLSYVLFIQER. Over 119-828 the chain is Cytoplasmic; it reads DVHKGMFATN…LEYILSFVVL (710 aa). The short motif at 230-235 is the HXXXXD motif element; that stretch reads HRSHID. Residues R278, R279, K288, R293, and R328 each coordinate CoA. The residue at position 380 (S380) is a Phosphoserine. The segment at 435–455 is disordered; that stretch reads SRPSDAADEGRDTSINESRNA. A compositionally biased stretch (basic and acidic residues) spans 442 to 455; sequence DEGRDTSINESRNA. CoA is bound at residue R462. Residues S688 and S695 each carry the phosphoserine modification. An N6-acetyllysine mark is found at K780 and K784.

It belongs to the GPAT/DAPAT family.

Its subcellular location is the mitochondrion outer membrane. It carries out the reaction sn-glycerol 3-phosphate + an acyl-CoA = a 1-acyl-sn-glycero-3-phosphate + CoA. It catalyses the reaction (9Z,12Z)-octadecadienoyl-CoA + sn-glycerol 3-phosphate = 1-(9Z,12Z)-octadecadienoyl-sn-glycero-3-phosphate + CoA. The enzyme catalyses sn-glycerol 3-phosphate + (9Z)-octadecenoyl-CoA = 1-(9Z-octadecenoyl)-sn-glycero-3-phosphate + CoA. The catalysed reaction is sn-glycerol 3-phosphate + octadecanoyl-CoA = 1-octadecanoyl-sn-glycero-3-phosphate + CoA. It carries out the reaction sn-glycerol 3-phosphate + hexadecanoyl-CoA = 1-hexadecanoyl-sn-glycero-3-phosphate + CoA. It catalyses the reaction dodecanoyl-CoA + sn-glycerol 3-phosphate = 1-dodecanoyl-sn-glycerol 3-phosphate + CoA. The enzyme catalyses 1-acyl-sn-glycero-3-phospho-(1'-sn-glycerol) + an acyl-CoA = a 1,2-diacyl-sn-glycero-3-phospho-(1'-sn-glycerol) + CoA. Its pathway is phospholipid metabolism; CDP-diacylglycerol biosynthesis; CDP-diacylglycerol from sn-glycerol 3-phosphate: step 1/3. Functionally, mitochondrial membrane protein that catalyzes the essential first step of biosynthesis of glycerolipids such as triglycerides, phosphatidic acids and lysophosphatidic acids. Esterifies acyl-group from acyl-coenzyme A (acyl-CoA) to the sn-1 position of glycerol-3-phosphate, to produce lysophosphatidic acid. Has a narrow hydrophobic binding cleft that selects for a linear acyl chain. Catalytic activity is higher for substrates with a 16-carbon acyl chain. This is Glycerol-3-phosphate acyltransferase 1, mitochondrial from Homo sapiens (Human).